We begin with the raw amino-acid sequence, 184 residues long: MTIKSDRWIQVMAREYGMIEPFVAEQVRGGIISYGLSSYGYDMRVADEFKVFTNVFNTLVDPKHFDPRSFVDIRGDYCDIPPNSFALARSVEYFRIPRNVLCIVLGKSTIARCGIIVNVTPLEPEWCGYVTIEISNTTPLPARIYANEGIAQVLFLESDEPPLVSYADKAGKYQNQTGVVPPRL.

A dCTP-binding site is contributed by 107-112 (KSTIAR). Glutamate 133 acts as the Proton donor/acceptor in catalysis. Residues glutamine 152, tyrosine 166, and glutamine 176 each coordinate dCTP.

It belongs to the dCTP deaminase family. As to quaternary structure, homotrimer.

It catalyses the reaction dCTP + H2O + H(+) = dUTP + NH4(+). Its pathway is pyrimidine metabolism; dUMP biosynthesis; dUMP from dCTP (dUTP route): step 1/2. In terms of biological role, catalyzes the deamination of dCTP to dUTP. The protein is dCTP deaminase of Roseiflexus castenholzii (strain DSM 13941 / HLO8).